The sequence spans 588 residues: MKLEFTEKNYNSFVLQNLNRQRKRKEYWDMALSVDNHVFFAHRNVLAAVSPLVRSLISSNDMKTADELFITIDTSYLSPVTVDQLLDYFYSGKVVISEQNVEELLRGAQYFNTPRLRVHCNDFLIKSICRANCLRYLFLAELFELKEVSDVAYSGIRDNFHYWASPEGSMHFMRCPPVIFGRLLRDENLHVLNEDQALSALINWVYFRKEDREKYFKKFFNYINLNAVSNKTLVFASNKLVGMENTSSHTTLIESVLMDRKQERPCSLLVYQRKGALLDSVVILGGQKAHGQFNDGVFAYIIQENLWMKLSDMPYRAAALSATSAGRYIYISGGTTEQISGLKTAWRYDMDDNSWTKLPDLPIGLVFHTMVTCGGTVYSVGGSIAPRRYVSNIYRYDERKEVWCLAGKMSIPMDGTAVITKGDRHLYIVTGRCLVKGYISRVGVVDCFDTSTGDVVQCITFPIEFNHRPLLSFQQDNILCVHSHRQSVEINLQKVKASKTTTSVPVLPNSCPLDVSHAICSIGDSKVFVCGGVTTASDVQTKDYTINPNAFLLDQKTGKWKTLAPPPEALDCPACCLAKLPCKILQRI.

Positions 12-124 constitute a BTB domain; sequence SFVLQNLNRQ…RLRVHCNDFL (113 aa). The region spanning 133 to 235 is the BACK domain; it reads CLRYLFLAEL…NAVSNKTLVF (103 aa). A Phosphoserine modification is found at S149. Kelch repeat units follow at residues 280 to 327, 328 to 375, 377 to 423, 425 to 475, 476 to 525, and 526 to 580; these read SVVI…SAGR, YIYI…TCGG, VYSV…TKGD, HLYI…SFQQ, DNIL…IGDS, and KVFV…LAKL.

As to quaternary structure, interacts with CYLC1; the interaction may be relevant for proper acrosome attachment to the nuclear envelope. In terms of tissue distribution, expressed in testis, in spermatozoa (at protein level).

The protein resides in the cytoplasm. It is found in the cytoskeleton. It localises to the perinuclear theca. Its subcellular location is the calyx. In terms of biological role, required for both nuclear and acrosomal shaping during spermiogenesis. The chain is Calicin (CCIN) from Homo sapiens (Human).